A 522-amino-acid polypeptide reads, in one-letter code: MPYLLMASHNPLPAGKQLLLLVLLCAFFSSSFIPFASCSITDDLQTQCLKVSATEFAGSLKDTIDAVQQVASILSQFANAFGDFRLANAISDCLDLLDFSADELNWSLSASQNQKGKNNSTGKLSSDLRTWLSAALVNQDTCSNGFEGTNSIVQGLISAGLGQVTSLVQELLTQVHPNSNQQGPNGQIPSWVKTKDRKLLQADGVSVDAIVAQDGTGNFTNVTDAVLAAPDYSMRRYVIYIKRGTYKENVEIKKKKWNLMMIGDGMDATIISGNRSFVDGWTTFRSATFAVSGRGFIARDITFENTAGPEKHQAVALRSDSDLSVFYRCNIRGYQDTLYTHTMRQFYRDCKISGTVDFIFGDATVVFQNCQILAKKGLPNQKNSITAQGRKDPNEPTGISIQFCNITADSDLEAASVNSTPTYLGRPWKLYSRTVIMQSFLSNVIRPEGWLEWNGDFALNSLFYGEYMNYGPGAGLGSRVKWPGYQVFNESTQAKNYTVAQFIEGNLWLPSTGVKYTAEFGV.

The signal sequence occupies residues 1–30 (MPYLLMASHNPLPAGKQLLLLVLLCAFFSS). Residues 31–174 (SFIPFASCSI…TSLVQELLTQ (144 aa)) are pectinesterase inhibitor PPE8B. Asn105, Asn118, Asn119, Asn218, Asn221, and Asn274 each carry an N-linked (GlcNAc...) asparagine glycan. A pectinesterase PPE8B region spans residues 208 to 506 (DAIVAQDGTG…YTVAQFIEGN (299 aa)). Substrate contacts are provided by Thr283 and Gln313. The Proton donor; for pectinesterase activity role is filled by Asp336. Residues Cys350 and Cys370 are joined by a disulfide bond. Asp357 (nucleophile; for pectinesterase activity) is an active-site residue. Asn405 carries N-linked (GlcNAc...) asparagine glycosylation. Positions 426 and 428 each coordinate substrate. Asn489 and Asn496 each carry an N-linked (GlcNAc...) asparagine glycan.

In the N-terminal section; belongs to the PMEI family. The protein in the C-terminal section; belongs to the pectinesterase family.

The protein resides in the secreted. It localises to the cell wall. The enzyme catalyses [(1-&gt;4)-alpha-D-galacturonosyl methyl ester](n) + n H2O = [(1-&gt;4)-alpha-D-galacturonosyl](n) + n methanol + n H(+). Its pathway is glycan metabolism; pectin degradation; 2-dehydro-3-deoxy-D-gluconate from pectin: step 1/5. May have roles in the deposition of pectin in developing tissues and in the wall loosening and cell separation that occurs in cell expansion, fruit ripening and abscission. This is Pectinesterase/pectinesterase inhibitor PPE8B from Prunus persica (Peach).